A 1534-amino-acid chain; its full sequence is ABC transporter G family member 6 (1534 aa).

The segment covering 1 to 11 (MAKQDPKDKNS) has biased composition (basic and acidic residues). The disordered stretch occupies residues 1-85 (MAKQDPKDKN…ESNYDSDDEK (85 aa)). The span at 21-65 (NNNNNENLDNDQELLNNNNNNNNNNNNNNNNNNNNNNNNNNNNNL) shows a compositional bias: low complexity. Residues 138–385 (VYCRNATYTV…FKKLGFACPS (248 aa)) enclose the ABC transporter 1 domain. 177-184 (GTPGCGKS) lines the ATP pocket. One can recognise an ABC transmembrane type-2 1 domain in the interval 481 to 757 (RRNYYNFLTR…VVCFFALKYF (277 aa)). 7 helical membrane passes run 486–506 (NFLT…TLYW), 521–541 (LLFF…NSFF), 566–586 (IICD…IVYW), 592–612 (PVFI…NLSL), 625–645 (IEIA…FSGF), 652–672 (IGGW…FQGL), and 734–754 (VVFG…FFAL). Residues 781 to 907 (KQDEESAAIS…KSKNGKDIGS (127 aa)) form a disordered region. Acidic residues predominate over residues 797–808 (IDDDNDDDADYE). The segment covering 830 to 841 (SPSSLTTGSPYY) has biased composition (polar residues). Residues 842 to 856 (NINNNNNNLSGSGNN) show a composition bias toward low complexity. The span at 864 to 873 (TPSNLSPSVN) shows a compositional bias: polar residues. A compositionally biased stretch (low complexity) spans 874–896 (SPITINSPMPTSPSNNNNNNNSN). The segment covering 897–906 (EKSKNGKDIG) has biased composition (basic and acidic residues). Residues 924-1166 (VKVDDPDNPK…VILDYCDKLG (243 aa)) form the ABC transporter 2 domain. 960 to 967 (GPSGAGKS) contacts ATP. Positions 1256–1529 (LRRPAIFVSN…GLSFWGFKKI (274 aa)) constitute an ABC transmembrane type-2 2 domain. 6 helical membrane passes run 1261–1281 (IFVS…TLFV), 1296–1316 (LLFF…PTTV), 1345–1365 (YPFT…IAGL), 1377–1397 (CLFI…CLAV), 1404–1424 (MAST…GFVI), and 1506–1526 (IDIA…FWGF).

It belongs to the ABC transporter superfamily. ABCG family. PDR (TC 3.A.1.205) subfamily.

It localises to the membrane. The protein is ABC transporter G family member 6 (abcG6) of Dictyostelium discoideum (Social amoeba).